We begin with the raw amino-acid sequence, 123 residues long: Ribosome-binding factor A (123 aa).

It belongs to the RbfA family. As to quaternary structure, monomer. Binds 30S ribosomal subunits, but not 50S ribosomal subunits or 70S ribosomes.

It localises to the cytoplasm. One of several proteins that assist in the late maturation steps of the functional core of the 30S ribosomal subunit. Associates with free 30S ribosomal subunits (but not with 30S subunits that are part of 70S ribosomes or polysomes). Required for efficient processing of 16S rRNA. May interact with the 5'-terminal helix region of 16S rRNA. In Chlorobium chlorochromatii (strain CaD3), this protein is Ribosome-binding factor A.